Consider the following 26-residue polypeptide: Peroxidase 1 (26 aa).

Position 15 (Asp-15) interacts with Ca(2+).

It belongs to the peroxidase family. Classical plant (class III) peroxidase subfamily. Heme b is required as a cofactor. Ca(2+) serves as cofactor.

The protein localises to the secreted. It catalyses the reaction 2 a phenolic donor + H2O2 = 2 a phenolic radical donor + 2 H2O. Removal of H(2)O(2), oxidation of toxic reductants, biosynthesis and degradation of lignin, suberization, auxin catabolism, response to environmental stresses such as wounding, pathogen attack and oxidative stress. These functions might be dependent on each isozyme/isoform in each plant tissue. The protein is Peroxidase 1 of Vitis vinifera (Grape).